A 309-amino-acid chain; its full sequence is tRNA dimethylallyltransferase (309 aa).

8 to 15 (GPTATGKS) is an ATP binding site. 10 to 15 (TATGKS) provides a ligand contact to substrate. The interval 33–36 (DSRQ) is interaction with substrate tRNA.

The protein belongs to the IPP transferase family. Monomer. Mg(2+) is required as a cofactor.

It carries out the reaction adenosine(37) in tRNA + dimethylallyl diphosphate = N(6)-dimethylallyladenosine(37) in tRNA + diphosphate. Catalyzes the transfer of a dimethylallyl group onto the adenine at position 37 in tRNAs that read codons beginning with uridine, leading to the formation of N6-(dimethylallyl)adenosine (i(6)A). In Trichodesmium erythraeum (strain IMS101), this protein is tRNA dimethylallyltransferase.